We begin with the raw amino-acid sequence, 364 residues long: Alpha-2-HS-glycoprotein (364 aa).

The or 17 signal peptide spans 1–15 (MKSFLLLFCLAQLCS). A Cystatin fetuin-A-type 1 domain is found at 27 to 133 (YKEPACDDPD…QFSVLFTKCD (107 aa)). 6 disulfides stabilise this stretch: cysteine 32/cysteine 355, cysteine 89/cysteine 100, cysteine 114/cysteine 132, cysteine 146/cysteine 149, cysteine 208/cysteine 219, and cysteine 230/cysteine 248. Asparagine 99 carries an N-linked (GlcNAc...) asparagine glycan. Phosphoserine is present on residues serine 134, serine 135, and serine 138. Residues 144–256 (KLCPDCPLLA…TCTLFQTQPV (113 aa)) form the Cystatin fetuin-A-type 2 domain. Residues asparagine 156 and asparagine 176 are each glycosylated (N-linked (GlcNAc...) asparagine). The O-linked (GalNAc...) serine glycan is linked to serine 301. Threonine 319 is modified (phosphothreonine). Phosphoserine occurs at positions 321, 325, 328, and 330. O-linked (GalNAc...) threonine glycosylation is present at threonine 339.

This sequence belongs to the fetuin family. In terms of processing, phosphorylated by FAM20C in the extracellular medium.

It is found in the secreted. The chain is Alpha-2-HS-glycoprotein (AHSG) from Ovis aries (Sheep).